A 353-amino-acid chain; its full sequence is Holliday junction branch migration complex subunit RuvB (353 aa).

The segment at 1 to 183 (MNEPRIVAPQ…FGATYRLDFY (183 aa)) is large ATPase domain (RuvB-L). Residues Leu-22, Arg-23, Gly-64, Lys-67, Thr-68, Thr-69, 130–132 (EDF), Arg-173, Tyr-183, and Arg-220 contribute to the ATP site. Thr-68 is a Mg(2+) binding site. The tract at residues 184 to 254 (DTAALRAIVE…LARLALDQLA (71 aa)) is small ATPAse domain (RuvB-S). The interval 257 to 353 (ELGLDEVDRL…HAASERSSDA (97 aa)) is head domain (RuvB-H). DNA-binding residues include Arg-312 and Arg-317.

The protein belongs to the RuvB family. As to quaternary structure, homohexamer. Forms an RuvA(8)-RuvB(12)-Holliday junction (HJ) complex. HJ DNA is sandwiched between 2 RuvA tetramers; dsDNA enters through RuvA and exits via RuvB. An RuvB hexamer assembles on each DNA strand where it exits the tetramer. Each RuvB hexamer is contacted by two RuvA subunits (via domain III) on 2 adjacent RuvB subunits; this complex drives branch migration. In the full resolvosome a probable DNA-RuvA(4)-RuvB(12)-RuvC(2) complex forms which resolves the HJ.

The protein resides in the cytoplasm. It carries out the reaction ATP + H2O = ADP + phosphate + H(+). Its function is as follows. The RuvA-RuvB-RuvC complex processes Holliday junction (HJ) DNA during genetic recombination and DNA repair, while the RuvA-RuvB complex plays an important role in the rescue of blocked DNA replication forks via replication fork reversal (RFR). RuvA specifically binds to HJ cruciform DNA, conferring on it an open structure. The RuvB hexamer acts as an ATP-dependent pump, pulling dsDNA into and through the RuvAB complex. RuvB forms 2 homohexamers on either side of HJ DNA bound by 1 or 2 RuvA tetramers; 4 subunits per hexamer contact DNA at a time. Coordinated motions by a converter formed by DNA-disengaged RuvB subunits stimulates ATP hydrolysis and nucleotide exchange. Immobilization of the converter enables RuvB to convert the ATP-contained energy into a lever motion, pulling 2 nucleotides of DNA out of the RuvA tetramer per ATP hydrolyzed, thus driving DNA branch migration. The RuvB motors rotate together with the DNA substrate, which together with the progressing nucleotide cycle form the mechanistic basis for DNA recombination by continuous HJ branch migration. Branch migration allows RuvC to scan DNA until it finds its consensus sequence, where it cleaves and resolves cruciform DNA. The sequence is that of Holliday junction branch migration complex subunit RuvB from Thermomicrobium roseum (strain ATCC 27502 / DSM 5159 / P-2).